We begin with the raw amino-acid sequence, 171 residues long: uncharacterized protein (171 aa).

The N-terminal stretch at 1-17 (MLKRIIWILFLLGLTWG) is a signal peptide.

In terms of biological role, part of the elfADCG-ycbUVF fimbrial operon, which promotes adhesion of bacteria to different abiotic surfaces. This is an uncharacterized protein from Escherichia coli (strain K12).